The sequence spans 629 residues: Chaperone protein HtpG (629 aa).

The interval 1–336 (MSSTENNGTA…TEDLSLNVSR (336 aa)) is a; substrate-binding. The interval 337-549 (EMVQSSPVMA…KDAIDSQLER (213 aa)) is b. The segment at 550 to 629 (MMKMMNTPMP…ELIEAATLTR (80 aa)) is c.

This sequence belongs to the heat shock protein 90 family. As to quaternary structure, homodimer.

The protein localises to the cytoplasm. Molecular chaperone. Has ATPase activity. The sequence is that of Chaperone protein HtpG from Chlorobium chlorochromatii (strain CaD3).